A 210-amino-acid polypeptide reads, in one-letter code: Eukaryotic translation initiation factor 2 subunit gamma (210 aa).

The tr-type G domain occupies 1 to 196 (IGHVAHGKST…HLVETITPPR (196 aa)). The G1 stretch occupies residues 2–9 (GHVAHGKS). 5–10 (AHGKST) serves as a coordination point for GTP. The segment at 30–34 (NITIK) is G2. Residues 85–88 (DCPG) form a G3 region. GTP contacts are provided by residues 141 to 144 (NKID) and 174 to 176 (SAI). Residues 141 to 144 (NKID) are G4. The G5 stretch occupies residues 174-176 (SAI).

The protein belongs to the TRAFAC class translation factor GTPase superfamily. Classic translation factor GTPase family. EIF2G subfamily. In terms of assembly, eukaryotic translation initiation factor 2 eIF2 is a heterotrimeric complex composed of an alpha, a beta and a gamma subunit. The factors eIF-1, eIF-2, eIF-3, TIF5/eIF-5 and methionyl-tRNAi form a multifactor complex (MFC) that may bind to the 40S ribosome.

The protein localises to the cytoplasm. Its subcellular location is the cytosol. The catalysed reaction is GTP + H2O = GDP + phosphate + H(+). As a subunit of eukaryotic initiation factor 2 eIF2, involved in the early steps of protein synthesis. In the presence of GTP, eIF-2 forms a ternary complex with initiator tRNA Met-tRNAi and then recruits the 40S ribosomal complex and initiation factors eIF-1, eIF-1A and eIF-3 to form the 43S pre-initiation complex (43S PIC), a step that determines the rate of protein translation. The 43S PIC binds to mRNA and scans downstream to the initiation codon, where it forms a 48S initiation complex by codon-anticodon base pairing. This leads to the displacement of eIF-1 to allow GTPase-activating protein (GAP) eIF-5-mediated hydrolysis of eIF2-bound GTP. Hydrolysis of GTP and release of Pi, which makes GTP hydrolysis irreversible, causes the release of the eIF-2-GDP binary complex from the 40S subunit, an event that is essential for the subsequent joining of the 60S ribosomal subunit to form an elongation-competent 80S ribosome. In order for eIF-2 to recycle and catalyze another round of initiation, the GDP bound to eIF-2 must be exchanged with GTP by way of a reaction catalyzed by GDP-GTP exchange factor (GEF) eIF-2B. The protein is Eukaryotic translation initiation factor 2 subunit gamma of Spironucleus vortens.